An 84-amino-acid polypeptide reads, in one-letter code: Delta-stichotoxin-Shd3a (84 aa).

Positions 1 to 19 are cleaved as a signal peptide; it reads MAYLKIVLVALMLVLGVSA. Positions 20–33 are excised as a propeptide; the sequence is MRLSDQEDQDVSVV. Cystine bridges form between Cys-38/Cys-78, Cys-40/Cys-68, and Cys-61/Cys-79. Lysine amide is present on Lys-83.

The protein belongs to the sea anemone sodium channel inhibitory toxin family. Type II subfamily.

Its subcellular location is the secreted. The protein resides in the nematocyst. Functionally, binds specifically to voltage-gated sodium channels (Nav), thereby delaying their inactivation during signal transduction. This Stichodactyla haddoni (Saddle carpet anemone) protein is Delta-stichotoxin-Shd3a.